A 218-amino-acid polypeptide reads, in one-letter code: Small ribosomal subunit protein uS5 (218 aa).

Residues 1-45 (MPGRQRRDGGNGPAGQNSNGPEGRDNRRGGGDRRGGGDRRDNAAE) are disordered. Residues 22 to 45 (EGRDNRRGGGDRRGGGDRRDNAAE) are compositionally biased toward basic and acidic residues. The S5 DRBM domain maps to 48-111 (QLERVVAINR…EEARKGFFRV (64 aa)).

It belongs to the universal ribosomal protein uS5 family. Part of the 30S ribosomal subunit. Contacts proteins S4 and S8.

In terms of biological role, with S4 and S12 plays an important role in translational accuracy. Located at the back of the 30S subunit body where it stabilizes the conformation of the head with respect to the body. In Nocardia farcinica (strain IFM 10152), this protein is Small ribosomal subunit protein uS5.